The chain runs to 360 residues: Alkanal monooxygenase alpha chain (360 aa).

It belongs to the bacterial luciferase oxidoreductase family. In terms of assembly, heterodimer of an alpha and a beta chain.

The catalysed reaction is a long-chain fatty aldehyde + FMNH2 + O2 = a long-chain fatty acid + hnu + FMN + H2O + 2 H(+). Functionally, light-emitting reaction in luminous bacteria. The sequence is that of Alkanal monooxygenase alpha chain (luxA) from Photorhabdus luminescens (Xenorhabdus luminescens).